The primary structure comprises 439 residues: Xaa-Pro dipeptidase (439 aa).

Mn(2+)-binding residues include Asp244, Asp255, His335, Glu380, and Glu419.

It belongs to the peptidase M24B family. Bacterial-type prolidase subfamily. The cofactor is Mn(2+).

The catalysed reaction is Xaa-L-Pro dipeptide + H2O = an L-alpha-amino acid + L-proline. Splits dipeptides with a prolyl residue in the C-terminal position. This Shewanella oneidensis (strain ATCC 700550 / JCM 31522 / CIP 106686 / LMG 19005 / NCIMB 14063 / MR-1) protein is Xaa-Pro dipeptidase.